Here is a 137-residue protein sequence, read N- to C-terminus: Small ribosomal subunit protein uS12 (137 aa).

Positions 1 to 55 (MPTINQLVRKPRKSKVEKSDSPALNKGYNSFKKTQTNVNSPQKRGVCTRVGTMTP) are disordered. Residues 27–42 (GYNSFKKTQTNVNSPQ) are compositionally biased toward polar residues. D102 is subject to 3-methylthioaspartic acid.

It belongs to the universal ribosomal protein uS12 family. In terms of assembly, part of the 30S ribosomal subunit. Contacts proteins S8 and S17. May interact with IF1 in the 30S initiation complex.

In terms of biological role, with S4 and S5 plays an important role in translational accuracy. Its function is as follows. Interacts with and stabilizes bases of the 16S rRNA that are involved in tRNA selection in the A site and with the mRNA backbone. Located at the interface of the 30S and 50S subunits, it traverses the body of the 30S subunit contacting proteins on the other side and probably holding the rRNA structure together. The combined cluster of proteins S8, S12 and S17 appears to hold together the shoulder and platform of the 30S subunit. The sequence is that of Small ribosomal subunit protein uS12 from Enterococcus faecalis (strain ATCC 700802 / V583).